The primary structure comprises 127 residues: Fatty acid binding protein 1-A, liver (127 aa).

This sequence belongs to the calycin superfamily. Fatty-acid binding protein (FABP) family. As to expression, in adults, weakly expressed in the intestine.

Its subcellular location is the cytoplasm. Binds free fatty acids and their coenzyme A derivatives, bilirubin, and some other small molecules in the cytoplasm. May be involved in intracellular lipid transport. This Danio rerio (Zebrafish) protein is Fatty acid binding protein 1-A, liver.